Consider the following 206-residue polypeptide: Urease accessory protein UreG (206 aa).

GTP is bound at residue 11 to 18; sequence GPVGAGKT.

Belongs to the SIMIBI class G3E GTPase family. UreG subfamily. Homodimer. UreD, UreF and UreG form a complex that acts as a GTP-hydrolysis-dependent molecular chaperone, activating the urease apoprotein by helping to assemble the nickel containing metallocenter of UreC. The UreE protein probably delivers the nickel.

Its subcellular location is the cytoplasm. Its function is as follows. Facilitates the functional incorporation of the urease nickel metallocenter. This process requires GTP hydrolysis, probably effectuated by UreG. This is Urease accessory protein UreG from Ureaplasma parvum serovar 3 (strain ATCC 700970).